The primary structure comprises 234 residues: Glucosamine-6-phosphate deaminase (234 aa).

The active-site Proton acceptor; for enolization step is D62. Catalysis depends on N128, which acts as the For ring-opening step. Residue H130 is the Proton acceptor; for ring-opening step of the active site. E135 functions as the For ring-opening step in the catalytic mechanism.

This sequence belongs to the glucosamine/galactosamine-6-phosphate isomerase family. NagB subfamily.

The catalysed reaction is alpha-D-glucosamine 6-phosphate + H2O = beta-D-fructose 6-phosphate + NH4(+). It participates in amino-sugar metabolism; N-acetylneuraminate degradation; D-fructose 6-phosphate from N-acetylneuraminate: step 5/5. Its function is as follows. Catalyzes the reversible isomerization-deamination of glucosamine 6-phosphate (GlcN6P) to form fructose 6-phosphate (Fru6P) and ammonium ion. This chain is Glucosamine-6-phosphate deaminase, found in Streptococcus uberis (strain ATCC BAA-854 / 0140J).